Consider the following 267-residue polypeptide: Undecaprenyl-diphosphatase (267 aa).

Helical transmembrane passes span T5–S25, F45–L65, I82–I102, F108–V128, F143–V163, A183–L203, A213–V233, and Y243–L263.

It belongs to the UppP family.

The protein resides in the cell inner membrane. It carries out the reaction di-trans,octa-cis-undecaprenyl diphosphate + H2O = di-trans,octa-cis-undecaprenyl phosphate + phosphate + H(+). Functionally, catalyzes the dephosphorylation of undecaprenyl diphosphate (UPP). Confers resistance to bacitracin. This is Undecaprenyl-diphosphatase from Paracoccus denitrificans (strain Pd 1222).